The chain runs to 460 residues: Elongation factor 1-alpha-B (460 aa).

Glycine 2 is modified (n,N,N-trimethylglycine). N6,N6-dimethyllysine; alternate is present on lysine 3. Position 3 is an N6-methyllysine; alternate (lysine 3). The tr-type G domain maps to 5-240 (KGHINVVVIG…DSIEPPARPT (236 aa)). The segment at 14–21 (GHVDSGKS) is G1. 14-21 (GHVDSGKS) contacts GTP. Position 30 is an N6-methyllysine (lysine 30). Residues 70 to 74 (GITID) form a G2 region. Lysine 79 is subject to N6,N6,N6-trimethyllysine. A G3 region spans residues 91–94 (DAPG). GTP is bound by residues 91–95 (DAPGH) and 153–156 (NKMD). Residues 153-156 (NKMD) form a G4 region. The interval 192–194 (SGF) is G5. N6,N6-dimethyllysine; alternate is present on lysine 316. An N6-methyllysine; alternate modification is found at lysine 316. Lysine 390 carries the post-translational modification N6-methyllysine.

It belongs to the TRAFAC class translation factor GTPase superfamily. Classic translation factor GTPase family. EF-Tu/EF-1A subfamily.

The protein localises to the cytoplasm. Functionally, this protein promotes the GTP-dependent binding of aminoacyl-tRNA to the A-site of ribosomes during protein biosynthesis. The chain is Elongation factor 1-alpha-B (tef102) from Schizosaccharomyces pombe (strain 972 / ATCC 24843) (Fission yeast).